The chain runs to 141 residues: Large ribosomal subunit protein uL11 (141 aa).

The protein belongs to the universal ribosomal protein uL11 family. In terms of assembly, part of the ribosomal stalk of the 50S ribosomal subunit. Interacts with L10 and the large rRNA to form the base of the stalk. L10 forms an elongated spine to which L12 dimers bind in a sequential fashion forming a multimeric L10(L12)X complex. One or more lysine residues are methylated.

Its function is as follows. Forms part of the ribosomal stalk which helps the ribosome interact with GTP-bound translation factors. The protein is Large ribosomal subunit protein uL11 of Listeria innocua serovar 6a (strain ATCC BAA-680 / CLIP 11262).